A 416-amino-acid chain; its full sequence is Squamosa promoter-binding-like protein 8 (416 aa).

The tract at residues 11-51 is disordered; the sequence is SSCDDFGYNATPPPPPSLLPIMDQDGGGGSIQRDHHQHHNH. Residues 182–260 form an SBP-type zinc finger; that stretch reads PPRCQAEGCK…ADHNRRRRKS (79 aa). Zn(2+)-binding residues include C185, C190, C207, H210, C227, C230, H234, and C246. A Bipartite nuclear localization signal motif is present at residues 243–259; that stretch reads KKSCRKRLADHNRRRRK. A disordered region spans residues 250-299; sequence LADHNRRRRKSKPSDGEHSGEKRRAQANKSAATKDKAGSSSKNAGIGDGF. Residues 261–273 are compositionally biased toward basic and acidic residues; the sequence is KPSDGEHSGEKRR.

Expressed in stems, leaf sheaths, and young panicles. Weakly expressed in ligules, auricles, and leaf sheaths at the basal region.

It is found in the nucleus. In terms of biological role, probable transcription factor that plays an important role in building the laminar joint between leaf blade and leaf sheath boundary, thereby controlling ligule and auricle development. The polypeptide is Squamosa promoter-binding-like protein 8 (SPL8) (Oryza sativa subsp. japonica (Rice)).